Consider the following 594-residue polypeptide: Glutamate decarboxylase 1 (594 aa).

Positions 1-13 (MASSTPSSSATSS) are enriched in low complexity. A disordered region spans residues 1–25 (MASSTPSSSATSSNAGPDPNTTNLR). Position 78 is a phosphoserine (S78). 190 to 192 (QLS) contacts 4-aminobutanoate. K405 carries the post-translational modification N6-(pyridoxal phosphate)lysine. R567 contacts 4-aminobutanoate.

Belongs to the group II decarboxylase family. In terms of assembly, homodimer. It depends on pyridoxal 5'-phosphate as a cofactor.

The catalysed reaction is L-glutamate + H(+) = 4-aminobutanoate + CO2. Functionally, catalyzes the synthesis of the inhibitory neurotransmitter gamma-aminobutyric acid (GABA) with pyridoxal 5'-phosphate as cofactor. This chain is Glutamate decarboxylase 1 (GAD1), found in Sus scrofa (Pig).